Here is a 139-residue protein sequence, read N- to C-terminus: Ribulose bisphosphate carboxylase small subunit (139 aa).

Belongs to the RuBisCO small chain family. Heterohexadecamer of 8 large and 8 small subunits.

The protein resides in the plastid. Its subcellular location is the chloroplast. RuBisCO catalyzes two reactions: the carboxylation of D-ribulose 1,5-bisphosphate, the primary event in carbon dioxide fixation, as well as the oxidative fragmentation of the pentose substrate in the photorespiration process. Both reactions occur simultaneously and in competition at the same active site. Although the small subunit is not catalytic it is essential for maximal activity. This Chrysotila carterae (Marine alga) protein is Ribulose bisphosphate carboxylase small subunit.